The primary structure comprises 51 residues: Methionine aminopeptidase (51 aa).

This sequence belongs to the peptidase M24A family. Methionine aminopeptidase type 1 subfamily. Monomer. Co(2+) is required as a cofactor. It depends on Zn(2+) as a cofactor. Mn(2+) serves as cofactor. Requires Fe(2+) as cofactor.

The catalysed reaction is Release of N-terminal amino acids, preferentially methionine, from peptides and arylamides.. Functionally, removes the N-terminal methionine from nascent proteins. The N-terminal methionine is often cleaved when the second residue in the primary sequence is small and uncharged (Met-Ala-, Cys, Gly, Pro, Ser, Thr, or Val). Requires deformylation of the N(alpha)-formylated initiator methionine before it can be hydrolyzed. This chain is Methionine aminopeptidase (map), found in Geobacillus stearothermophilus (Bacillus stearothermophilus).